Reading from the N-terminus, the 334-residue chain is Ornithine carbamoyltransferase (334 aa).

Carbamoyl phosphate-binding positions include Ser-57–Thr-60, Gln-84, Arg-108, and His-135–Gln-138. L-ornithine-binding positions include Asn-169, Asp-233, and Ser-237–Met-238. Carbamoyl phosphate contacts are provided by residues Cys-275–Leu-276 and Arg-320.

This sequence belongs to the aspartate/ornithine carbamoyltransferase superfamily. OTCase family.

It is found in the cytoplasm. It catalyses the reaction carbamoyl phosphate + L-ornithine = L-citrulline + phosphate + H(+). It functions in the pathway amino-acid biosynthesis; L-arginine biosynthesis; L-arginine from L-ornithine and carbamoyl phosphate: step 1/3. Its function is as follows. Reversibly catalyzes the transfer of the carbamoyl group from carbamoyl phosphate (CP) to the N(epsilon) atom of ornithine (ORN) to produce L-citrulline. The polypeptide is Ornithine carbamoyltransferase (Aeromonas salmonicida (strain A449)).